The sequence spans 100 residues: Osteocalcin (100 aa).

Residues M1–A23 form the signal peptide. A propeptide spanning residues K24–R51 is cleaved from the precursor. Positions Y52–G98 constitute a Gla domain. P60 is modified (4-hydroxyproline). The Ca(2+) site is built by E68, E72, E75, and D81. Residues E68, E72, and E75 each carry the 4-carboxyglutamate modification. A disulfide bond links C74 and C80.

Belongs to the osteocalcin/matrix Gla protein family. In terms of processing, gamma-carboxyglutamate residues are formed by vitamin K dependent carboxylation by GGCX. These residues are essential for the binding of calcium. Decarboxylation promotes the hormone activity.

It is found in the secreted. In terms of biological role, the carboxylated form is one of the main organic components of the bone matrix, which constitutes 1-2% of the total bone protein. It acts as a negative regulator of bone formation and is required to limit bone formation without impairing bone resorption or mineralization. The carboxylated form binds strongly to apatite and calcium. Its function is as follows. The uncarboxylated form acts as a hormone secreted by osteoblasts, which regulates different cellular processes, such as energy metabolism, male fertility and brain development. Regulates of energy metabolism by acting as a hormone favoring pancreatic beta-cell proliferation, insulin secretion and sensitivity and energy expenditure. Uncarboxylated osteocalcin hormone also promotes testosterone production in the testes: acts as a ligand for G protein-coupled receptor GPRC6A at the surface of Leydig cells, initiating a signaling response that promotes the expression of enzymes required for testosterone synthesis in a CREB-dependent manner. Also acts as a regulator of brain development: osteocalcin hormone crosses the blood-brain barrier and acts as a ligand for GPR158 on neurons, initiating a signaling response that prevents neuronal apoptosis in the hippocampus, favors the synthesis of all monoamine neurotransmitters and inhibits that of gamma-aminobutyric acid (GABA). Osteocalcin also crosses the placenta during pregnancy and maternal osteocalcin is required for fetal brain development. In Bos taurus (Bovine), this protein is Osteocalcin (BGLAP).